A 400-amino-acid polypeptide reads, in one-letter code: Enoyl-[acyl-carrier-protein] reductase [NADH] 1 (400 aa).

NAD(+)-binding positions include 48–53 (GSSSGY), 74–75 (FE), 111–112 (DA), and 139–140 (LA). Tyr225 provides a ligand contact to substrate. Tyr235 serves as the catalytic Proton donor. Residues Lys244 and 273 to 275 (VVT) contribute to the NAD(+) site.

This sequence belongs to the TER reductase family. As to quaternary structure, monomer.

It catalyses the reaction a 2,3-saturated acyl-[ACP] + NAD(+) = a (2E)-enoyl-[ACP] + NADH + H(+). Its pathway is lipid metabolism; fatty acid biosynthesis. Its function is as follows. Involved in the final reduction of the elongation cycle of fatty acid synthesis (FAS II). Catalyzes the reduction of a carbon-carbon double bond in an enoyl moiety that is covalently linked to an acyl carrier protein (ACP). This chain is Enoyl-[acyl-carrier-protein] reductase [NADH] 1, found in Photobacterium profundum (strain SS9).